The sequence spans 493 residues: Growth-regulating factor 8 (493 aa).

The QLQ domain maps to 149–184; the sequence is AFSEAQWHELERQRNIYKYMMASVPVPPELLTPFPK. Positions 243–287 constitute a WRC domain; it reads DLEPWRCKRTDGKKWRCSRNVIPDQKYCERHTHKSRPRSRKHVES. 2 short sequence motifs (bipartite nuclear localization signal) span residues 248–258 and 276–283; these read RCKRTDGKKWR and KSRPRSRK. A disordered region spans residues 270-302; sequence CERHTHKSRPRSRKHVESSHQSSHHNDIRTAKN. Residues 273-283 are compositionally biased toward basic residues; sequence HTHKSRPRSRK.

The protein belongs to the GRF family. As to expression, predominantly expressed in shoot tips and flowers.

It localises to the nucleus. Functionally, transcription activator that plays a role in the regulation of cell expansion in leaf and cotyledons tissues. Component of a network formed by miR396, the GRFs and their interacting factors (GIFs) acting in the regulation of meristem function, at least partially through the control of cell proliferation. The sequence is that of Growth-regulating factor 8 (GRF8) from Arabidopsis thaliana (Mouse-ear cress).